Consider the following 186-residue polypeptide: Elongation factor P (186 aa).

The protein belongs to the elongation factor P family.

Its subcellular location is the cytoplasm. The protein operates within protein biosynthesis; polypeptide chain elongation. In terms of biological role, involved in peptide bond synthesis. Stimulates efficient translation and peptide-bond synthesis on native or reconstituted 70S ribosomes in vitro. Probably functions indirectly by altering the affinity of the ribosome for aminoacyl-tRNA, thus increasing their reactivity as acceptors for peptidyl transferase. This Mycoplasmopsis synoviae (strain 53) (Mycoplasma synoviae) protein is Elongation factor P.